Here is a 177-residue protein sequence, read N- to C-terminus: Protein CutA 1, chloroplastic (177 aa).

The N-terminal 60 residues, 1-60 (MPLLPSPLGSLSAAATAAPRRAAAAAGLSPLLLRRRAPIAGALLFLSLGAFAGVRSLSSS), are a transit peptide targeting the chloroplast.

It belongs to the CutA family. Homotrimer.

The protein localises to the plastid. It localises to the chloroplast. The polypeptide is Protein CutA 1, chloroplastic (CUTA1) (Oryza sativa subsp. japonica (Rice)).